The sequence spans 142 residues: Large ribosomal subunit protein uL13 (142 aa).

It belongs to the universal ribosomal protein uL13 family. In terms of assembly, part of the 50S ribosomal subunit.

Its function is as follows. This protein is one of the early assembly proteins of the 50S ribosomal subunit, although it is not seen to bind rRNA by itself. It is important during the early stages of 50S assembly. The sequence is that of Large ribosomal subunit protein uL13 from Vibrio atlanticus (strain LGP32) (Vibrio splendidus (strain Mel32)).